Consider the following 250-residue polypeptide: Probable transcriptional regulatory protein Paes_0496 (250 aa).

Belongs to the TACO1 family.

Its subcellular location is the cytoplasm. The protein is Probable transcriptional regulatory protein Paes_0496 of Prosthecochloris aestuarii (strain DSM 271 / SK 413).